A 605-amino-acid polypeptide reads, in one-letter code: Elongation factor 4 (605 aa).

The 183-residue stretch at 11-193 (KCIRNFSIIA…QIVTRISPPQ (183 aa)) folds into the tr-type G domain. Residues 23–28 (DHGKST) and 140–143 (NKVD) each bind GTP.

Belongs to the TRAFAC class translation factor GTPase superfamily. Classic translation factor GTPase family. LepA subfamily.

The protein localises to the cell membrane. It carries out the reaction GTP + H2O = GDP + phosphate + H(+). Its function is as follows. Required for accurate and efficient protein synthesis under certain stress conditions. May act as a fidelity factor of the translation reaction, by catalyzing a one-codon backward translocation of tRNAs on improperly translocated ribosomes. Back-translocation proceeds from a post-translocation (POST) complex to a pre-translocation (PRE) complex, thus giving elongation factor G a second chance to translocate the tRNAs correctly. Binds to ribosomes in a GTP-dependent manner. This is Elongation factor 4 from Aster yellows witches'-broom phytoplasma (strain AYWB).